The primary structure comprises 96 residues: Protein RnfH (96 aa).

Belongs to the UPF0125 (RnfH) family.

The sequence is that of Protein RnfH from Escherichia coli O127:H6 (strain E2348/69 / EPEC).